Consider the following 549-residue polypeptide: Cation/acetate symporter ActP (549 aa).

A run of 13 helical transmembrane segments spans residues 33 to 53 (WQAI…TYWA), 77 to 97 (LAIA…ALVF), 103 to 123 (GLIY…LIAE), 148 to 168 (ILSA…QMVG), 183 to 203 (IAVV…GMLA), 206 to 226 (WVQI…AFMV), 262 to 282 (ISAL…PHIL), 303 to 323 (GFMG…IMLV), 355 to 375 (LFLG…VAGL), 404 to 424 (VSKI…VLFE), 428 to 448 (IAFM…PIIL), 464 to 484 (GGWL…TIWV), and 493 to 513 (IFPY…GIWF).

The protein belongs to the sodium:solute symporter (SSF) (TC 2.A.21) family.

The protein resides in the cell inner membrane. Its function is as follows. Transports acetate. The chain is Cation/acetate symporter ActP from Escherichia coli O8 (strain IAI1).